A 123-amino-acid chain; its full sequence is Large ribosomal subunit protein uL29 (123 aa).

Positions 84 to 123 are disordered; the sequence is RPKKTRAMRRRLNKHEEGLKTKKQQRKERLYPPRKYAVKA. Residues 86 to 96 are compositionally biased toward basic residues; the sequence is KKTRAMRRRLN.

Belongs to the universal ribosomal protein uL29 family. As to quaternary structure, component of the large ribosomal subunit.

The protein localises to the cytoplasm. In terms of biological role, component of the large ribosomal subunit. The ribosome is a large ribonucleoprotein complex responsible for the synthesis of proteins in the cell. In Ophiophagus hannah (King cobra), this protein is Large ribosomal subunit protein uL29 (RPL35).